Here is a 566-residue protein sequence, read N- to C-terminus: Urease subunit alpha (566 aa).

Positions 128–566 constitute a Urease domain; the sequence is GGIDTHIHWI…LPMAQRYFLF (439 aa). The Ni(2+) site is built by histidine 133, histidine 135, and lysine 216. Position 216 is an N6-carboxylysine (lysine 216). Residue histidine 218 participates in substrate binding. Ni(2+)-binding residues include histidine 245 and histidine 271. The active-site Proton donor is the histidine 319. Position 359 (aspartate 359) interacts with Ni(2+).

It belongs to the metallo-dependent hydrolases superfamily. Urease alpha subunit family. As to quaternary structure, heterotrimer of UreA (gamma), UreB (beta) and UreC (alpha) subunits. Three heterotrimers associate to form the active enzyme. It depends on Ni cation as a cofactor. Post-translationally, carboxylation allows a single lysine to coordinate two nickel ions.

It is found in the cytoplasm. The catalysed reaction is urea + 2 H2O + H(+) = hydrogencarbonate + 2 NH4(+). It participates in nitrogen metabolism; urea degradation; CO(2) and NH(3) from urea (urease route): step 1/1. This Acinetobacter baylyi (strain ATCC 33305 / BD413 / ADP1) protein is Urease subunit alpha.